The sequence spans 124 residues: Small ribosomal subunit protein uS12 (124 aa).

The tract at residues 9–28 (RTERQTLSRKTKSPALRSCP) is disordered. 3-methylthioaspartic acid is present on Asp-89. The disordered stretch occupies residues 104–124 (TAGVKDRRQSRSKYGAKAPKE).

It belongs to the universal ribosomal protein uS12 family. As to quaternary structure, part of the 30S ribosomal subunit. Contacts proteins S8 and S17. May interact with IF1 in the 30S initiation complex.

Its function is as follows. With S4 and S5 plays an important role in translational accuracy. Interacts with and stabilizes bases of the 16S rRNA that are involved in tRNA selection in the A site and with the mRNA backbone. Located at the interface of the 30S and 50S subunits, it traverses the body of the 30S subunit contacting proteins on the other side and probably holding the rRNA structure together. The combined cluster of proteins S8, S12 and S17 appears to hold together the shoulder and platform of the 30S subunit. The polypeptide is Small ribosomal subunit protein uS12 (Synechococcus sp. (strain RCC307)).